The sequence spans 121 residues: Large ribosomal subunit protein bL12 (121 aa).

The protein belongs to the bacterial ribosomal protein bL12 family. In terms of assembly, homodimer. Part of the ribosomal stalk of the 50S ribosomal subunit. Forms a multimeric L10(L12)X complex, where L10 forms an elongated spine to which 2 to 4 L12 dimers bind in a sequential fashion. Binds GTP-bound translation factors.

Functionally, forms part of the ribosomal stalk which helps the ribosome interact with GTP-bound translation factors. Is thus essential for accurate translation. The sequence is that of Large ribosomal subunit protein bL12 from Anoxybacillus flavithermus (strain DSM 21510 / WK1).